Here is a 220-residue protein sequence, read N- to C-terminus: uncharacterized protein (220 aa).

A disordered region spans residues 194–220 (DQSQQQATKSNSKTKKLKGNHGEKTKI). The segment covering 195–204 (QSQQQATKSN) has biased composition (polar residues).

This is an uncharacterized protein from Borreliella burgdorferi (strain ATCC 35210 / DSM 4680 / CIP 102532 / B31) (Borrelia burgdorferi).